A 179-amino-acid chain; its full sequence is Large ribosomal subunit protein uL6c (179 aa).

It belongs to the universal ribosomal protein uL6 family. In terms of assembly, part of the 50S ribosomal subunit.

It localises to the plastid. The protein localises to the cyanelle. Its function is as follows. Binds 23S rRNA. This chain is Large ribosomal subunit protein uL6c (rpl6), found in Cyanophora paradoxa.